We begin with the raw amino-acid sequence, 186 residues long: Peptidyl-tRNA hydrolase (186 aa).

Tyr-14 provides a ligand contact to tRNA. Catalysis depends on His-19, which acts as the Proton acceptor. TRNA is bound by residues Tyr-64, Asn-66, and Asn-112.

This sequence belongs to the PTH family. As to quaternary structure, monomer.

It localises to the cytoplasm. It catalyses the reaction an N-acyl-L-alpha-aminoacyl-tRNA + H2O = an N-acyl-L-amino acid + a tRNA + H(+). Its function is as follows. Hydrolyzes ribosome-free peptidyl-tRNAs (with 1 or more amino acids incorporated), which drop off the ribosome during protein synthesis, or as a result of ribosome stalling. In terms of biological role, catalyzes the release of premature peptidyl moieties from peptidyl-tRNA molecules trapped in stalled 50S ribosomal subunits, and thus maintains levels of free tRNAs and 50S ribosomes. This Lachnospira eligens (strain ATCC 27750 / DSM 3376 / VPI C15-48 / C15-B4) (Eubacterium eligens) protein is Peptidyl-tRNA hydrolase.